The primary structure comprises 294 residues: uncharacterized protein (294 aa).

Residues 5 to 25 (ILIILIIIIIVIISLIYLKNF) form a helical membrane-spanning segment. 4 N-linked (GlcNAc...) asparagine; by host glycosylation sites follow: Asn151, Asn170, Asn205, and Asn271.

It localises to the membrane. This is an uncharacterized protein from Acanthamoeba polyphaga (Amoeba).